The following is a 93-amino-acid chain: Alpha-elapitoxin-Oh2a (93 aa).

The signal sequence occupies residues 1-21 (MKTLLLTLVVVTIVCLDLGYT). 5 disulfide bridges follow: Cys-24–Cys-43, Cys-36–Cys-64, Cys-49–Cys-53, Cys-68–Cys-79, and Cys-80–Cys-85.

This sequence belongs to the three-finger toxin family. Long-chain subfamily. Type II alpha-neurotoxin sub-subfamily. Expressed by the venom gland.

The protein resides in the secreted. Its function is as follows. Binds with high affinity to muscular (alpha-1/CHRNA1) and neuronal (alpha-7/CHRNA7) nicotinic acetylcholine receptor (nAChR) and inhibits acetylcholine from binding to the receptor, thereby impairing neuromuscular and neuronal transmission. This is Alpha-elapitoxin-Oh2a from Ophiophagus hannah (King cobra).